Consider the following 64-residue polypeptide: Alpha-conotoxin CnIA (64 aa).

A signal peptide spans 1–21 (MGMRMMFTVFLLVVLTTTVVS). Positions 22-47 (FPSDSASDGRDDEAKDERSDIYESKR) are excised as a propeptide. Disulfide bonds link cysteine 51–cysteine 56 and cysteine 52–cysteine 62. The residue at position 54 (proline 54) is a 4-hydroxyproline; in CnIK; partial. The residue at position 62 (cysteine 62) is a Cysteine amide.

It belongs to the conotoxin A superfamily. As to expression, expressed by the venom duct.

It is found in the secreted. Functionally, alpha-conotoxins act on postsynaptic membranes, they bind to the nicotinic acetylcholine receptors (nAChR) and thus inhibit them. CnIA and CnIB block muscular nAChR alpha-1/gamma and alpha-1/delta subunits. The protein is Alpha-conotoxin CnIA of Conus consors (Singed cone).